Consider the following 1279-residue polypeptide: Maestro heat-like repeat-containing protein family member 7 (1279 aa).

Residues 1–145 (MALSRGTSLI…NSSRPCSEDV (145 aa)) are disordered. The span at 39–61 (PDLALAPPPEHALALTPALHPAL) shows a compositional bias: low complexity. 2 stretches are compositionally biased toward polar residues: residues 71–106 (PVSN…NHTS) and 124–140 (PSST…SSRP). Residues Asn-200, Asn-210, Asn-255, Asn-267, and Asn-296 are each glycosylated (N-linked (GlcNAc...) asparagine). Ser-356 is subject to Phosphoserine. An N-linked (GlcNAc...) asparagine glycan is attached at Asn-541. Helical transmembrane passes span 548–568 (TLVT…LLLG) and 722–742 (LLPI…ALLM). 4 HEAT repeats span residues 913–950 (QELC…MEQV), 992–1029 (AKVQ…GQGK), 1035–1072 (AVYV…KLQT), and 1080–1117 (EQLT…FMNW).

It localises to the membrane. The protein is Maestro heat-like repeat-containing protein family member 7 (Mroh7) of Mus musculus (Mouse).